The sequence spans 89 residues: Cell division topological specificity factor (89 aa).

Belongs to the MinE family.

Its function is as follows. Prevents the cell division inhibition by proteins MinC and MinD at internal division sites while permitting inhibition at polar sites. This ensures cell division at the proper site by restricting the formation of a division septum at the midpoint of the long axis of the cell. This Legionella pneumophila (strain Paris) protein is Cell division topological specificity factor.